We begin with the raw amino-acid sequence, 177 residues long: Large ribosomal subunit protein bL19 (177 aa).

Belongs to the bacterial ribosomal protein bL19 family.

In terms of biological role, this protein is located at the 30S-50S ribosomal subunit interface and may play a role in the structure and function of the aminoacyl-tRNA binding site. This Sinorhizobium medicae (strain WSM419) (Ensifer medicae) protein is Large ribosomal subunit protein bL19.